The following is a 673-amino-acid chain: Hemocyanin subunit C (673 aa).

The first 20 residues, 1–20 (MGAWKVWTFFAIALVVAVKA), serve as a signal peptide directing secretion. Positions 207, 211, and 237 each coordinate Cu cation. Asn-323 is a glycosylation site (N-linked (GlcNAc...) asparagine). Cu cation contacts are provided by His-358, His-362, and His-398. Residues Cys-568 and Cys-616 are joined by a disulfide bond.

Belongs to the tyrosinase family. Hemocyanin subfamily. As to quaternary structure, 36-chain polymer consisting of 6 hexamers, each of which includes 4 different chains, A, B, C and D. Hemolymph.

The protein resides in the secreted. Its subcellular location is the extracellular space. Functionally, hemocyanins are copper-containing oxygen carriers occurring freely dissolved in the hemolymph of many mollusks and arthropods. The sequence is that of Hemocyanin subunit C (HCC) from Scutigera coleoptrata (House centipede).